A 382-amino-acid chain; its full sequence is Prolargin (382 aa).

Residues 1–20 form the signal peptide; the sequence is MRSPLCWLLPLLILASVAQG. The segment at 19–66 is disordered; the sequence is QGQPTRRPRPGTGPGRRPRPRPRPTPSFPQPDEPAEPTDLPPPLPPGP. Composition is skewed to pro residues over residues 41–50 and 57–66; these read RPTPSFPQPD and DLPPPLPPGP. 12 LRR repeats span residues 95-114, 115-138, 139-162, 163-183, 184-207, 208-233, 234-254, 255-278, 279-303, 304-323, 324-362, and 363-382; these read RKVPVIPPRIHYLYLQNNFI, TELPVESFQNATGLRWINLDNNRI, RKIDQRVLEKLPGLVFLYMEKNQL, EEVPSALPRNLEQLRLSQNHI, SRIPPGVFSKLENLLLLDLQHNRL, SDGVFKPDTFHGLKNLMQLNLAHNIL, RKMPPRVPTAIHQLYLDSNKI, ETIPNGYFKSFPNLAFIRLNYNKL, TDRGLPKNSFNISNLLVLHLSHNRI, SSVPAINNRLEHLYLNNNSI, EKINGTQICPNDLVAFHDFSSDLENVPHLRYLRLDGNYL, and KPPIPLDLMMCFRLLQSVVI. Asn-124 carries an N-linked (GlcNAc...) asparagine glycan. N-linked (GlcNAc...) asparagine glycans are attached at residues Asn-289, Asn-320, and Asn-327. Cys-332 and Cys-373 are joined by a disulfide.

This sequence belongs to the small leucine-rich proteoglycan (SLRP) family. SLRP class II subfamily. In terms of assembly, binds the basement membrane heparan sulfate proteoglycan perlecan and triple helical collagens type I and type II. Glycosylated; contains heparan sulfate. In terms of tissue distribution, connective tissue.

The protein localises to the secreted. It is found in the extracellular space. It localises to the extracellular matrix. Functionally, may anchor basement membranes to the underlying connective tissue. This is Prolargin (PRELP) from Homo sapiens (Human).